The chain runs to 676 residues: Probable ERAD-associated E3 ubiquitin-protein ligase ASI1 (676 aa).

Residues 1–78 lie on the Perinuclear space side of the membrane; it reads MSTNILQHVK…TLQLAKVGIR (78 aa). N-linked (GlcNAc...) asparagine glycosylation is found at N24, N34, N46, and N66. Residues 79 to 99 traverse the membrane as a helical segment; that stretch reads MFFSYSVSKYAVLCFSTAIIL. Over 100–126 the chain is Nuclear; that stretch reads NRLTVMSSLRSNSTNIRLPLWSKTLLH. Residues 127 to 147 form a helical membrane-spanning segment; it reads LVATLSLVKALLQILSQFGLM. Residues 148–156 are Perinuclear space-facing; that stretch reads HELHVSDTD. The chain crosses the membrane as a helical span at residues 157–177; sequence FYALSVYLFVALSDCIEIFIS. The Nuclear segment spans residues 178-181; the sequence is STTN. The chain crosses the membrane as a helical span at residues 182–202; that stretch reads VPSLICSDFSIWGLSLNLYII. Over 203-277 the chain is Perinuclear space; the sequence is SKMPAGQQHI…NICLIHNYFP (75 aa). Residues 278–298 form a helical membrane-spanning segment; it reads GFFYISTILLASIGIFLKALF. Residues 299-676 are Nuclear-facing; sequence TSNPFRSLYS…VKGYSKLNIV (378 aa). The RING-type; atypical zinc-finger motif lies at 624–664; the sequence is CLICKVNKRNIVTWPCRCLALCDDCRISLGYKGFATCVSCD.

Component of the Asi complex, which contains ASI1, ASI2 and ASI3. Interacts directly with ASI1.

Its subcellular location is the nucleus inner membrane. It catalyses the reaction S-ubiquitinyl-[E2 ubiquitin-conjugating enzyme]-L-cysteine + [acceptor protein]-L-lysine = [E2 ubiquitin-conjugating enzyme]-L-cysteine + N(6)-ubiquitinyl-[acceptor protein]-L-lysine.. In terms of biological role, part of the nuclear inner membrane (INM)-specific branch of the ER-associated degradation (ERAD) pathway, required for the elimination of misfolded proteins in the INM, a specialized ER subdomain. Required for ERG11 degradation. Negative regulator of SPS-sensor signaling. Together with ASI2 and ASI3, prevents the unprocessed precursor forms of STP1 and STP2 that escape cytoplasmic anchoring from inducing SPS-sensor-regulated genes in the absence of inducing signals. Controls amino acid permease (AAP) gene expression in response to amino acid availability, a process mediated by the transcription factors STP1 and STP1. The chain is Probable ERAD-associated E3 ubiquitin-protein ligase ASI1 (ASI3) from Saccharomyces cerevisiae (strain ATCC 204508 / S288c) (Baker's yeast).